Here is a 155-residue protein sequence, read N- to C-terminus: Putative pre-16S rRNA nuclease (155 aa).

The protein belongs to the YqgF nuclease family.

It is found in the cytoplasm. Functionally, could be a nuclease involved in processing of the 5'-end of pre-16S rRNA. The sequence is that of Putative pre-16S rRNA nuclease from Xanthomonas campestris pv. campestris (strain 8004).